Reading from the N-terminus, the 88-residue chain is U-scoloptoxin(XY)-Er1a (88 aa).

The signal sequence occupies residues 1–24 (MASQVVLSFALVVVLAVFVGQVDS). Residues 66-88 (RPELSPGAWDDSSEEKDNEASLA) form a disordered region. Residues 79–88 (EEKDNEASLA) constitute a propeptide that is removed on maturation.

The protein belongs to the scoloptoxin-XY family. In terms of processing, contains 3 disulfide bonds. As to expression, expressed by the venom gland.

Its subcellular location is the secreted. This chain is U-scoloptoxin(XY)-Er1a, found in Ethmostigmus rubripes (Giant centipede).